The following is a 234-amino-acid chain: C2H2-type zinc-finger transcription factor clz7 (234 aa).

2 disordered regions span residues 45-99 (RPEG…SRVD) and 118-154 (SAQP…NGTA). Composition is skewed to low complexity over residues 66-77 (SQSSNTSPTSES) and 140-154 (SSGT…NGTA). The C2H2-type 1; degenerate zinc-finger motif lies at 159–184 (NRCWDHGCNGKKFLNHSNLVRHRREN). The segment at 191–223 (FICPMCGAYFSRSTARNQHLEKKSCNRVRRYSN) adopts a C2H2-type 2; degenerate zinc-finger fold.

It belongs to the GLI C2H2-type zinc-finger protein family.

The protein localises to the nucleus. Functionally, transcription factor that probably regulates the expression of the gene cluster that mediates the biosynthesis of squalestatin S1 (SQS1, also known as zaragozic acid A), a heavily oxidized fungal polyketide that offers potent cholesterol lowering activity by targeting squalene synthase (SS). The protein is C2H2-type zinc-finger transcription factor clz7 of Cochliobolus lunatus (Filamentous fungus).